Here is a 274-residue protein sequence, read N- to C-terminus: tRNA-cytidine(32) 2-sulfurtransferase (274 aa).

Positions 40 to 45 (SGGKDS) match the PP-loop motif motif. Residues cysteine 115, cysteine 118, and cysteine 206 each coordinate [4Fe-4S] cluster.

The protein belongs to the TtcA family. As to quaternary structure, homodimer. Requires Mg(2+) as cofactor. [4Fe-4S] cluster serves as cofactor.

Its subcellular location is the cytoplasm. It carries out the reaction cytidine(32) in tRNA + S-sulfanyl-L-cysteinyl-[cysteine desulfurase] + AH2 + ATP = 2-thiocytidine(32) in tRNA + L-cysteinyl-[cysteine desulfurase] + A + AMP + diphosphate + H(+). The protein operates within tRNA modification. Its function is as follows. Catalyzes the ATP-dependent 2-thiolation of cytidine in position 32 of tRNA, to form 2-thiocytidine (s(2)C32). The sulfur atoms are provided by the cysteine/cysteine desulfurase (IscS) system. The chain is tRNA-cytidine(32) 2-sulfurtransferase from Pseudomonas syringae pv. tomato (strain ATCC BAA-871 / DC3000).